The sequence spans 469 residues: Trigger factor (469 aa).

In terms of domain architecture, PPIase FKBP-type spans 162-243 (GDFVSIDLSA…VKSVKERELP (82 aa)). Positions 429–469 (NTIDTSEFFGKHAQSDKADQKTEEADPNSDAIDEEVDEAAE) are disordered. Residues 437-452 (FGKHAQSDKADQKTEE) show a composition bias toward basic and acidic residues. Over residues 453–469 (ADPNSDAIDEEVDEAAE) the composition is skewed to acidic residues.

It belongs to the FKBP-type PPIase family. Tig subfamily.

It localises to the cytoplasm. The enzyme catalyses [protein]-peptidylproline (omega=180) = [protein]-peptidylproline (omega=0). Involved in protein export. Acts as a chaperone by maintaining the newly synthesized protein in an open conformation. Functions as a peptidyl-prolyl cis-trans isomerase. This is Trigger factor from Mycobacterium leprae (strain Br4923).